Reading from the N-terminus, the 198-residue chain is Ribonuclease HII (198 aa).

The RNase H type-2 domain maps to 3–198 (LSVGGIDEAG…SWETVGKLFK (196 aa)). A divalent metal cation-binding residues include D9, E10, and D104.

It belongs to the RNase HII family. It depends on Mn(2+) as a cofactor. The cofactor is Mg(2+).

Its subcellular location is the cytoplasm. It catalyses the reaction Endonucleolytic cleavage to 5'-phosphomonoester.. In terms of biological role, endonuclease that specifically degrades the RNA of RNA-DNA hybrids. In Pyrobaculum arsenaticum (strain DSM 13514 / JCM 11321 / PZ6), this protein is Ribonuclease HII.